Reading from the N-terminus, the 368-residue chain is MNVLRSGLVTMLLLAAFSVQAACTWPAWEQFKKDYISQEGRVIDPSDARKITTSEGQSYGMFFALAANDRAAFDNILDWTQNNLAQGSLKERLPAWLWGKKENSKWEVLDSNSASDGDVWMAWSLLEAGRLWKEQRYTDIGSALLKRIAREEVVTVPGLGSMLLPGKVGFAEDNSWRFNPSYLPPTLAQYFTRFGAPWTTLRETNQRLLLETAPKGFSPDWVRYEKDKGWQLKAEKTLISSYDAIRVYMWVGMMPDSDPQKARMLNRFKPMATFTEKNGYPPEKVDVATGKAQGKGPVGFSAAMLPFLQNRDAQAVQRQRVADNFPGSDAYYNYVLTLFGQGWDQHRFRFSTKGELLPDWGQECANSH.

Positions 1–21 are cleaved as a signal peptide; the sequence is MNVLRSGLVTMLLLAAFSVQA. The active-site Proton donor is the Glu-55. Asp-116 acts as the Nucleophile in catalysis.

It belongs to the glycosyl hydrolase 8 (cellulase D) family.

The protein localises to the secreted. The catalysed reaction is Endohydrolysis of (1-&gt;4)-beta-D-glucosidic linkages in cellulose, lichenin and cereal beta-D-glucans.. The protein operates within glycan metabolism; bacterial cellulose biosynthesis. Hydrolyzes carboxymethylcellulose. This chain is Endoglucanase (bcsZ), found in Escherichia coli O157:H7.